The primary structure comprises 444 residues: Probable polygalacturonase At1g80170 (444 aa).

The signal sequence occupies residues 1–28 (MSYSRGGTLVTLLLLLVVASSLALTANA). PbH1 repeat units follow at residues 208–234 (CRRV…HISV), 235–256 (SRGI…SIVK), 258–278 (STQI…SIGS), 288–309 (VRDI…RIKT), 317–338 (VSKI…IIDQ), and 351–378 (TSAI…KISC). The active-site Proton donor is aspartate 249. Histidine 272 is a catalytic residue.

Belongs to the glycosyl hydrolase 28 family. Expressed in young, mature and dehiscing anthers. Found in stems, but not in roots or in abscission zone of floral organs.

It is found in the secreted. The protein resides in the cell wall. It carries out the reaction (1,4-alpha-D-galacturonosyl)n+m + H2O = (1,4-alpha-D-galacturonosyl)n + (1,4-alpha-D-galacturonosyl)m.. This is Probable polygalacturonase At1g80170 from Arabidopsis thaliana (Mouse-ear cress).